Reading from the N-terminus, the 317-residue chain is NAC domain-containing protein 19 (317 aa).

An NAC domain is found at 14-162; that stretch reads LPPGFRFYPT…DWVLCRIYKK (149 aa).

As to quaternary structure, dimer. Interacts with RHA2A, RHA2B or RHG1A, but not with RHA3A or RHA3B. Expressed in stems, flowers, cauline leaves and rosettes.

It is found in the nucleus. In terms of biological role, transcription factors that bind specifically to the 5'-CATGTG-3' motif. In Arabidopsis thaliana (Mouse-ear cress), this protein is NAC domain-containing protein 19 (NAC019).